Reading from the N-terminus, the 223-residue chain is Small ribosomal subunit protein uS5 (223 aa).

A disordered region spans residues 1–48 (MPGRQRRDGGSGPAGQNGPNSGDNSNARGDNRGGGRDRRDGGRGGNAA). Positions 29–42 (GDNRGGGRDRRDGG) are enriched in basic and acidic residues. The region spanning 53–116 (FIERVVTINR…EEARKSFFRV (64 aa)) is the S5 DRBM domain.

It belongs to the universal ribosomal protein uS5 family. As to quaternary structure, part of the 30S ribosomal subunit. Contacts proteins S4 and S8.

With S4 and S12 plays an important role in translational accuracy. In terms of biological role, located at the back of the 30S subunit body where it stabilizes the conformation of the head with respect to the body. This chain is Small ribosomal subunit protein uS5, found in Rhodococcus erythropolis (strain PR4 / NBRC 100887).